The following is a 123-amino-acid chain: Large ribosomal subunit protein bL17 (123 aa).

It belongs to the bacterial ribosomal protein bL17 family. Part of the 50S ribosomal subunit. Contacts protein L32.

The chain is Large ribosomal subunit protein bL17 from Borreliella afzelii (strain PKo) (Borrelia afzelii).